Reading from the N-terminus, the 461-residue chain is GTPase Der (461 aa).

EngA-type G domains follow at residues 9–171 (KTIA…NLNK) and 200–371 (IQVG…ECFS). GTP contacts are provided by residues 15 to 22 (GQPNVGKS), 62 to 66 (DTGGM), 123 to 126 (NKID), 206 to 213 (GRVNVGKS), 253 to 257 (DTAGI), and 317 to 320 (NKWD). The 85-residue stretch at 372–456 (KRIPTSLLNS…PLILNAKDKK (85 aa)) folds into the KH-like domain.

This sequence belongs to the TRAFAC class TrmE-Era-EngA-EngB-Septin-like GTPase superfamily. EngA (Der) GTPase family. Associates with the 50S ribosomal subunit.

Its function is as follows. GTPase that plays an essential role in the late steps of ribosome biogenesis. This is GTPase Der from Helicobacter pylori (strain HPAG1).